The sequence spans 447 residues: N-succinylarginine dihydrolase (447 aa).

Substrate contacts are provided by residues 19 to 28 (AGLSFGNEAS), N110, and 137 to 138 (HR). E174 is a catalytic residue. R214 is a substrate binding site. H250 is a catalytic residue. 2 residues coordinate substrate: D252 and N365. C371 functions as the Nucleophile in the catalytic mechanism.

It belongs to the succinylarginine dihydrolase family. In terms of assembly, homodimer.

The catalysed reaction is N(2)-succinyl-L-arginine + 2 H2O + 2 H(+) = N(2)-succinyl-L-ornithine + 2 NH4(+) + CO2. Its pathway is amino-acid degradation; L-arginine degradation via AST pathway; L-glutamate and succinate from L-arginine: step 2/5. Catalyzes the hydrolysis of N(2)-succinylarginine into N(2)-succinylornithine, ammonia and CO(2). In Acinetobacter baumannii (strain ATCC 17978 / DSM 105126 / CIP 53.77 / LMG 1025 / NCDC KC755 / 5377), this protein is N-succinylarginine dihydrolase.